Consider the following 381-residue polypeptide: Homoserine O-succinyltransferase (381 aa).

One can recognise an AB hydrolase-1 domain in the interval 45–360; the sequence is NAVLVCHALN…PHGHDAFLLD (316 aa). Residue Ser-151 is the Nucleophile of the active site. A substrate-binding site is contributed by Arg-221. Residues Asp-321 and His-354 contribute to the active site. A substrate-binding site is contributed by Asp-355.

It belongs to the AB hydrolase superfamily. MetX family. Homodimer.

It is found in the cytoplasm. The catalysed reaction is L-homoserine + succinyl-CoA = O-succinyl-L-homoserine + CoA. It functions in the pathway amino-acid biosynthesis; L-methionine biosynthesis via de novo pathway; O-succinyl-L-homoserine from L-homoserine: step 1/1. Transfers a succinyl group from succinyl-CoA to L-homoserine, forming succinyl-L-homoserine. The sequence is that of Homoserine O-succinyltransferase from Paraburkholderia phytofirmans (strain DSM 17436 / LMG 22146 / PsJN) (Burkholderia phytofirmans).